We begin with the raw amino-acid sequence, 51 residues long: Insulin (51 aa).

3 cysteine pairs are disulfide-bonded: C8–C37, C20–C50, and C36–C41.

It belongs to the insulin family. As to quaternary structure, heterodimer of a B chain and an A chain linked by two disulfide bonds.

The protein resides in the secreted. Its function is as follows. Insulin decreases blood glucose concentration. It increases cell permeability to monosaccharides, amino acids and fatty acids. It accelerates glycolysis, the pentose phosphate cycle, and glycogen synthesis in liver. The polypeptide is Insulin (ins) (Platichthys flesus (European flounder)).